The chain runs to 533 residues: Glucose-6-phosphate isomerase (533 aa).

Glu322 functions as the Proton donor in the catalytic mechanism. Residues His351 and Lys455 contribute to the active site.

This sequence belongs to the GPI family.

It localises to the cytoplasm. The catalysed reaction is alpha-D-glucose 6-phosphate = beta-D-fructose 6-phosphate. It participates in carbohydrate biosynthesis; gluconeogenesis. Its pathway is carbohydrate degradation; glycolysis; D-glyceraldehyde 3-phosphate and glycerone phosphate from D-glucose: step 2/4. Functionally, catalyzes the reversible isomerization of glucose-6-phosphate to fructose-6-phosphate. The protein is Glucose-6-phosphate isomerase of Desulfitobacterium hafniense (strain Y51).